Reading from the N-terminus, the 91-residue chain is Bacterial microcompartment shell protein PduJ (91 aa).

Residues 4–88 (ALGLVETKGL…PHSDVEAILP (85 aa)) form the BMC domain.

It belongs to the bacterial microcompartments protein family. As to quaternary structure, homohexamer with a central pore of about 5.7 Angstroms in diameter. Interacts with PduP, which targets PduP to the BMC.

The protein resides in the bacterial microcompartment. It participates in polyol metabolism; 1,2-propanediol degradation. Functionally, one of the major shell proteins of the bacterial microcompartment (BMC) dedicated to 1,2-propanediol (1,2-PD) degradation. The isolated BMC shell component protein ratio for J:A:B':B:K:T:U is approximately 15:10:7:6:1:1:2. At least one of PduA or PduJ is required for BMC assembly; it must be encoded as the first gene in the pdu operon. Required for structural integrity of BMCs and to mitigate propionaldehyde toxicity, probably joins facets responsible for BMC closure. Edge residues (particularly Lys-25) are important for function and assembly of the BMC. 80% identical to PduA; although their pore regions appear structurally identical, unlike PduA plays no role in 1,2-PD diffusion into or out of the BMC shell. If pduJ is cloned in the chromosomal position of pduA it is able to complement a pduA deletion; it then has a functional pore as it assumes the transport functions of PduA. Overexpression of this protein leads to aberrant filaments that extend the length of the cell, cross the cleavage furrow and impair division. The filaments form nanotubes with a hollow center. Modeling suggests PduJ is probably the hub for binding multiple enzymes to the interior of the BMC; modeling suggests PduC, PduD, PduG and PduM are targeted to PduJ. In terms of biological role, the 1,2-propanediol (1,2-PD) degradation bacterial microcompartment (BMC) concentrates low levels of 1,2-PD catabolic enzymes, concentrates volatile reaction intermediates thus enhancing pathway flux and keeps the level of toxic, mutagenic propionaldehyde low. The sequence is that of Bacterial microcompartment shell protein PduJ from Salmonella typhimurium (strain LT2 / SGSC1412 / ATCC 700720).